A 540-amino-acid chain; its full sequence is Dynein axonemal assembly factor 3 homolog (540 aa).

Residues 480 to 499 (AVTEAMPESTFKYDTDTDYG) form a disordered region.

The protein belongs to the DNAAF3 family. In terms of tissue distribution, expressed in mechanosensory chordotonal (Ch) neurons, spermatocytes and spermatids (at protein level).

It is found in the cytoplasm. Its subcellular location is the dynein axonemal particle. In terms of biological role, required for the assembly of axonemal inner and outer dynein arms. Involved in the cytoplasmic preassembly of dyneins into complexes before their transport into cilia. Essential for the development of axonemal dynein motors in the sensory cilium of mechanosensory chordotonal (Ch) neurons and sperm flagellum, and consequently, is required for the mechanotransduction process of hearing and sperm mobility. This is Dynein axonemal assembly factor 3 homolog from Drosophila melanogaster (Fruit fly).